The following is a 409-amino-acid chain: Isovaleryl-CoA dehydrogenase, mitochondrial (409 aa).

The N-terminal 22 residues, 1 to 22 (MQRFFSARSILGYAVKTRRRSF), are a transit peptide targeting the mitochondrion. FAD is bound by residues 151 to 160 (LAMSEPNAGS) and 184 to 186 (WCT). Substrate is bound at residue Ser160. Substrate is bound by residues 206 to 207 (SK), Tyr261, and 268 to 271 (DLER). Glu270 serves as the catalytic Proton acceptor. FAD contacts are provided by residues Arg296, Gln307, and 364 to 368 (QCLGG). A substrate-binding site is contributed by 391 to 392 (AG). 393–395 (TSE) contributes to the FAD binding site.

This sequence belongs to the acyl-CoA dehydrogenase family. In terms of assembly, homodimer. Requires FAD as cofactor. In terms of tissue distribution, expressed in leaves, stems and flowers. Not detected in roots.

Its subcellular location is the mitochondrion. The enzyme catalyses 3-methylbutanoyl-CoA + oxidized [electron-transfer flavoprotein] + H(+) = 3-methylbut-2-enoyl-CoA + reduced [electron-transfer flavoprotein]. Its pathway is amino-acid degradation; L-leucine degradation; (S)-3-hydroxy-3-methylglutaryl-CoA from 3-isovaleryl-CoA: step 1/3. Functionally, involved in degradation of the branched-chain amino acids, phytol and lysine for the supply of carbon and electrons to the ETF/ETFQO complex during dark-induced sugar starvation. The protein is Isovaleryl-CoA dehydrogenase, mitochondrial (IVD) of Arabidopsis thaliana (Mouse-ear cress).